A 269-amino-acid chain; its full sequence is MQGVSRTSLTEVIRRLDDILPSANTATLGHELFEVVALLDQEHSLRRWLADPAGSPDSKSELVNSLLETKVSPATLLVVSDVVRAQWSRPRDLVDAVEQAAVLATVAEHASARELEGVEDELFRFGRIVAGQPELRAALTTDGASIEHKRTLVENLLSGKVSTATLTLVTEAVTRPRGRTLEQGLEHFSQLVAERAKHYIAVVRAAVPLSEAQQSRLQAALTRIYGRDIHLNIEITPEIVGGLSIRVGDEVIDGTIAGRIAEVRRRLAG.

Belongs to the ATPase delta chain family. In terms of assembly, F-type ATPases have 2 components, F(1) - the catalytic core - and F(0) - the membrane proton channel. F(1) has five subunits: alpha(3), beta(3), gamma(1), delta(1), epsilon(1). F(0) has three main subunits: a(1), b(2) and c(10-14). The alpha and beta chains form an alternating ring which encloses part of the gamma chain. F(1) is attached to F(0) by a central stalk formed by the gamma and epsilon chains, while a peripheral stalk is formed by the delta and b chains.

The protein localises to the cell membrane. In terms of biological role, f(1)F(0) ATP synthase produces ATP from ADP in the presence of a proton or sodium gradient. F-type ATPases consist of two structural domains, F(1) containing the extramembraneous catalytic core and F(0) containing the membrane proton channel, linked together by a central stalk and a peripheral stalk. During catalysis, ATP synthesis in the catalytic domain of F(1) is coupled via a rotary mechanism of the central stalk subunits to proton translocation. Functionally, this protein is part of the stalk that links CF(0) to CF(1). It either transmits conformational changes from CF(0) to CF(1) or is implicated in proton conduction. The polypeptide is ATP synthase subunit delta (Thermobifida fusca (strain YX)).